A 359-amino-acid polypeptide reads, in one-letter code: Peptide chain release factor 1 (359 aa).

At Q235 the chain carries N5-methylglutamine.

It belongs to the prokaryotic/mitochondrial release factor family. In terms of processing, methylated by PrmC. Methylation increases the termination efficiency of RF1.

It is found in the cytoplasm. In terms of biological role, peptide chain release factor 1 directs the termination of translation in response to the peptide chain termination codons UAG and UAA. The sequence is that of Peptide chain release factor 1 from Anaplasma phagocytophilum (strain HZ).